We begin with the raw amino-acid sequence, 36 residues long: Photosystem I reaction center subunit VIII (36 aa).

A helical membrane pass occupies residues 5–27 (FLPSILVPLVGLVFPAIAIASLF).

It belongs to the PsaI family.

It is found in the plastid. The protein localises to the chloroplast thylakoid membrane. Its function is as follows. May help in the organization of the PsaL subunit. The chain is Photosystem I reaction center subunit VIII from Chaetosphaeridium globosum (Charophycean green alga).